The primary structure comprises 349 residues: Ion-translocating oxidoreductase complex subunit D (349 aa).

A run of 3 helical transmembrane segments spans residues Ala-37 to Ala-57, Leu-73 to Pro-90, and Ala-124 to Ala-144. Thr-185 carries the FMN phosphoryl threonine modification. A run of 5 helical transmembrane segments spans residues Ala-212–Leu-232, Trp-239–Leu-259, Gly-265–Thr-285, Ala-291–Ile-311, and Gly-315–Ile-335.

The protein belongs to the NqrB/RnfD family. The complex is composed of six subunits: RnfA, RnfB, RnfC, RnfD, RnfE and RnfG. FMN is required as a cofactor.

It is found in the cell inner membrane. Part of a membrane-bound complex that couples electron transfer with translocation of ions across the membrane. This chain is Ion-translocating oxidoreductase complex subunit D, found in Shewanella sp. (strain W3-18-1).